The following is a 218-amino-acid chain: Lactosylceramide 4-alpha-galactosyltransferase (218 aa).

The short motif at 57–59 (DTD) is the DXD motif element.

Belongs to the glycosyltransferase 32 family.

It is found in the golgi apparatus membrane. The catalysed reaction is a beta-D-Gal-(1-&gt;4)-beta-D-Glc-(1&lt;-&gt;1)-Cer(d18:1(4E)) + UDP-alpha-D-galactose = a globoside Gb3Cer (d18:1(4E)) + UDP + H(+). The enzyme catalyses a beta-D-Gal-(1&lt;-&gt;1')-ceramide + UDP-alpha-D-galactose = alpha-D-Gal-(1-&gt;4)-beta-D-Gal-(1&lt;-&gt;1')-Cer + UDP + H(+). Its pathway is glycolipid biosynthesis. Its function is as follows. Catalyzes the transfer of galactose from UDP-alpha-D-galactose to lactosylceramide/beta-D-galactosyl-(1-&gt;4)-beta-D-glucosyl-(1&lt;-&gt;1)-ceramide(d18:1(4E)) to produce globotriaosylceramide/globoside Gb3Cer (d18:1(4E)). Also able to transfer galactose to galactosylceramide/beta-D-Gal-(1&lt;-&gt;1')-Cer. Globoside Gb3Cer is a glycosphingolipid of the globo serie, one of the major types of neutral root structures of glycosphingolipids, that constitute a significant portion of mammalian cell membranes. The polypeptide is Lactosylceramide 4-alpha-galactosyltransferase (A4GALT) (Pongo pygmaeus (Bornean orangutan)).